Reading from the N-terminus, the 267-residue chain is Undecaprenyl-diphosphatase (267 aa).

The next 7 membrane-spanning stretches (helical) occupy residues 1–21 (MPLLQLILVALIQGVTEFLPV), 40–60 (GQAIDVAVHVGTLAAVVLFFW), 85–105 (LALGLIVATIPTVIFGTFLYF), 112–132 (LRSVAVIGWTMLVFGVVLYIA), 188–208 (IAMLMSIPTIIASGVLLGTEV), 219–239 (DMGIAALLAMASALAALALMM), and 245–265 (VSFTPYVIYRVALGMVLLFIA).

Belongs to the UppP family.

It is found in the cell inner membrane. It carries out the reaction di-trans,octa-cis-undecaprenyl diphosphate + H2O = di-trans,octa-cis-undecaprenyl phosphate + phosphate + H(+). Functionally, catalyzes the dephosphorylation of undecaprenyl diphosphate (UPP). Confers resistance to bacitracin. The chain is Undecaprenyl-diphosphatase from Ruegeria sp. (strain TM1040) (Silicibacter sp.).